A 127-amino-acid polypeptide reads, in one-letter code: MAEAGAGGLSETVTETTVTVTTEPENRSLTIKLRKRKPEKKVEWSSDTVDNEHMGRRSSKCCCIYEKPRAFGESSTESDEDEEEGCGHTHCVRGHRKGRRPTTPGPTPTTPPQPPDPSQPPPGPMQH.

Disordered stretches follow at residues 1 to 55 and 70 to 127; these read MAEA…EHMG and AFGE…PMQH. An N-acetylalanine modification is found at alanine 2. Low complexity predominate over residues 11 to 23; that stretch reads ETVTETTVTVTTE. Residues 40 to 55 show a composition bias toward basic and acidic residues; it reads KKVEWSSDTVDNEHMG. Residues 53–63 form an atypical RING finger domain 1 region; sequence HMGRRSSKCCC. Serine 74 and serine 75 each carry phosphoserine. Position 76 is a phosphothreonine (threonine 76). Serine 78 carries the phosphoserine modification. The interval 86 to 95 is atypical RING finger domain 2; that stretch reads CGHTHCVRGH. The segment covering 90-100 has biased composition (basic residues); sequence HCVRGHRKGRR. A compositionally biased stretch (pro residues) spans 103-127; sequence TPGPTPTTPPQPPDPSQPPPGPMQH. A Phosphothreonine modification is found at threonine 110.

Interacts with TLR2 and UBE2D2. Auto-ubiquitinated.

It catalyses the reaction S-ubiquitinyl-[E2 ubiquitin-conjugating enzyme]-L-cysteine + [acceptor protein]-L-lysine = [E2 ubiquitin-conjugating enzyme]-L-cysteine + N(6)-ubiquitinyl-[acceptor protein]-L-lysine.. It participates in protein modification; protein ubiquitination. In terms of biological role, atypical E3 ubiquitin-protein ligase which ubiquitinates TLR2 at 'Lys-754' leading to its degradation by the proteasome. Plays a role in regulating inflammatory cytokine release and gram-positive bacterial clearance by functioning, in part, through the ubiquitination and degradation of TLR2. Inhibitor of protein phosphatase 1. The chain is E3 ubiquitin-protein ligase PPP1R11 (Ppp1r11) from Rattus norvegicus (Rat).